Here is a 912-residue protein sequence, read N- to C-terminus: Protein SLFN14 (912 aa).

Residues 206–391 form a required for endoribonuclease activity region; the sequence is ESTHVEFKRF…KVHKFKEALQ (186 aa). A required for ribosome binding region spans residues 392 to 571; that stretch reads RHLFPVTQEE…QMGCEFFNLL (180 aa). 593–600 lines the ATP pocket; sequence CFPGVRKT.

This sequence belongs to the Schlafen family. Subgroup III subfamily. In terms of assembly, associates with ribosomes in an ATP-independent manner. The cofactor is Mg(2+). Requires Mn(2+) as cofactor. As to expression, expressed in megakaryocytes and platelets (at protein level). Weakly expressed in melanocytes and malignant melanoma cells.

It is found in the nucleus. Its function is as follows. Shows no ribosome-associated and endoribonuclease activities. Displays polysome-associated endoribonuclease activity towards mRNAs and rRNAs. May play a role in RNA surveillance pathways by recognizing stalled ribosomes and triggering endonucleolytic cleavage of aberrant mRNAs. Cleaves different types of rRNAs and mRNAs in a magnesium- and manganese-dependent and ATP-independent manner. Involved in correct maturation of megakaryocytes and especially important for proplatelet extension. This is Protein SLFN14 from Homo sapiens (Human).